The primary structure comprises 159 residues: Large ribosomal subunit protein uL23m (159 aa).

It belongs to the universal ribosomal protein uL23 family. As to quaternary structure, component of the mitochondrial ribosome large subunit (39S) which comprises a 16S rRNA and about 50 distinct proteins.

It is found in the mitochondrion. The chain is Large ribosomal subunit protein uL23m (mrpl-23) from Caenorhabditis elegans.